Here is a 947-residue protein sequence, read N- to C-terminus: DEAD-box ATP-dependent RNA helicase 45 (947 aa).

Acidic residues predominate over residues 1–14 (MEEEEVVVVVDEEE). Disordered stretches follow at residues 1–132 (MEEE…EDEI) and 159–221 (SMPA…EEFM). Basic and acidic residues-rich tracts occupy residues 15–31 (SERR…KRLD) and 42–61 (KEWQ…REQE). The segment covering 62 to 82 (AAAGAGTPAAAAGADGDSNAG) has biased composition (low complexity). 2 stretches are compositionally biased toward acidic residues: residues 88–108 (DGEE…EDDG) and 196–219 (DDSD…DDEE). Residues 285 to 313 (KTWVQSGLTSKLLDTIKKLGFEKPMPIQA) carry the Q motif motif. The Helicase ATP-binding domain occupies 316-494 (LPIIMSGRDC…RKVLTKPVEI (179 aa)). 329–336 (AKTGSGKT) lines the ATP pocket. A DEAD box motif is present at residues 442 to 445 (DEAD). The Helicase C-terminal domain occupies 479 to 647 (QVEILARKVL…AVPQDLKGLA (169 aa)). A disordered region spans residues 658–710 (TEQAHGTGYGGSGFKFNEEEDEARRSAKKAQAREYGYEEDKSDSDSDEEGGVR). Acidic residues predominate over residues 697–706 (DKSDSDSDEE). Residues 854 to 879 (TELSVKKAKSELKRVLEDCANHALNL) adopt a coiled-coil conformation.

Belongs to the DEAD box helicase family. DDX46/PRP5 subfamily.

The enzyme catalyses ATP + H2O = ADP + phosphate + H(+). The protein is DEAD-box ATP-dependent RNA helicase 45 of Oryza sativa subsp. japonica (Rice).